Reading from the N-terminus, the 441-residue chain is Glutamyl-tRNA reductase (441 aa).

Residues 58–61, Ser-116, 121–123, and Gln-127 contribute to the substrate site; these read TCNR and EPD. Cys-59 serves as the catalytic Nucleophile. Residue 195–200 participates in NADP(+) binding; the sequence is GAGMAG.

The protein belongs to the glutamyl-tRNA reductase family. Homodimer.

The catalysed reaction is (S)-4-amino-5-oxopentanoate + tRNA(Glu) + NADP(+) = L-glutamyl-tRNA(Glu) + NADPH + H(+). It functions in the pathway porphyrin-containing compound metabolism; protoporphyrin-IX biosynthesis; 5-aminolevulinate from L-glutamyl-tRNA(Glu): step 1/2. Catalyzes the NADPH-dependent reduction of glutamyl-tRNA(Glu) to glutamate 1-semialdehyde (GSA). This Ignicoccus hospitalis (strain KIN4/I / DSM 18386 / JCM 14125) protein is Glutamyl-tRNA reductase.